A 74-amino-acid polypeptide reads, in one-letter code: MAAEPKAATAEVVKMDLFEDDDEFEEFEINEDWLEKEEVKEVSQQWEDDWDDDDVNDDFSRQLRKELENGTDKK.

A disordered region spans residues 35-74 (EKEEVKEVSQQWEDDWDDDDVNDDFSRQLRKELENGTDKK). The span at 46–57 (WEDDWDDDDVND) shows a compositional bias: acidic residues. The segment covering 58 to 74 (DFSRQLRKELENGTDKK) has biased composition (basic and acidic residues).

Belongs to the DSS1/SEM1 family. As to quaternary structure, part of the 26S proteasome. Interacts with BRCA2A and BRCA2B. Interacts with UCH1 and UCH2. Can form a tripartite complex with both RAD51 and BRCA2B or both DMC1 and BRCA2B.

In terms of biological role, subunit of the 26S proteasome which plays a role in ubiquitin-dependent proteolysis. This is Protein DELETION OF SUV3 SUPPRESSOR 1(I) from Arabidopsis thaliana (Mouse-ear cress).